The sequence spans 61 residues: Small ribosomal subunit protein uS14 (61 aa).

Positions 24, 27, 40, and 43 each coordinate Zn(2+).

This sequence belongs to the universal ribosomal protein uS14 family. Zinc-binding uS14 subfamily. Part of the 30S ribosomal subunit. Contacts proteins S3 and S10. Zn(2+) is required as a cofactor.

Binds 16S rRNA, required for the assembly of 30S particles and may also be responsible for determining the conformation of the 16S rRNA at the A site. The polypeptide is Small ribosomal subunit protein uS14 (Mycobacterium leprae (strain Br4923)).